A 600-amino-acid chain; its full sequence is Elongation factor 4 (600 aa).

Residues 5–187 enclose the tr-type G domain; the sequence is KYIRNFSIIA…AIVNKLPPPK (183 aa). Residues 17–22 and 134–137 each bind GTP; these read DHGKST and NKLD.

The protein belongs to the TRAFAC class translation factor GTPase superfamily. Classic translation factor GTPase family. LepA subfamily.

The protein resides in the cell inner membrane. It catalyses the reaction GTP + H2O = GDP + phosphate + H(+). In terms of biological role, required for accurate and efficient protein synthesis under certain stress conditions. May act as a fidelity factor of the translation reaction, by catalyzing a one-codon backward translocation of tRNAs on improperly translocated ribosomes. Back-translocation proceeds from a post-translocation (POST) complex to a pre-translocation (PRE) complex, thus giving elongation factor G a second chance to translocate the tRNAs correctly. Binds to ribosomes in a GTP-dependent manner. The sequence is that of Elongation factor 4 from Rickettsia conorii (strain ATCC VR-613 / Malish 7).